The primary structure comprises 105 residues: Met repressor (105 aa).

It belongs to the MetJ family. In terms of assembly, homodimer.

Its subcellular location is the cytoplasm. Functionally, this regulatory protein, when combined with SAM (S-adenosylmethionine) represses the expression of the methionine regulon and of enzymes involved in SAM synthesis. The protein is Met repressor of Actinobacillus pleuropneumoniae serotype 7 (strain AP76).